A 465-amino-acid chain; its full sequence is ATP synthase subunit beta (465 aa).

Gly-152–Thr-159 contributes to the ATP binding site.

Belongs to the ATPase alpha/beta chains family. In terms of assembly, F-type ATPases have 2 components, CF(1) - the catalytic core - and CF(0) - the membrane proton channel. CF(1) has five subunits: alpha(3), beta(3), gamma(1), delta(1), epsilon(1). CF(0) has three main subunits: a(1), b(2) and c(9-12). The alpha and beta chains form an alternating ring which encloses part of the gamma chain. CF(1) is attached to CF(0) by a central stalk formed by the gamma and epsilon chains, while a peripheral stalk is formed by the delta and b chains.

The protein resides in the cell inner membrane. The catalysed reaction is ATP + H2O + 4 H(+)(in) = ADP + phosphate + 5 H(+)(out). Its function is as follows. Produces ATP from ADP in the presence of a proton gradient across the membrane. The catalytic sites are hosted primarily by the beta subunits. This chain is ATP synthase subunit beta, found in Campylobacter fetus subsp. fetus (strain 82-40).